The primary structure comprises 3957 residues: Ankyrin-2 (3957 aa).

A compositionally biased stretch (basic and acidic residues) spans 1-14 (MMNEDAAQKSDSGE). Positions 1-34 (MMNEDAAQKSDSGEKFNGSSQRRKRPKKSDSNAS) are disordered. ANK repeat units lie at residues 30-62 (DSNA…TCNQ), 63-92 (NGLN…SVDS), 96-125 (KGNT…NINA), 129-158 (NGFT…NQST), 162-191 (DGFT…KGKV), 193-220 (LPAL…NADV), 232-261 (SGFT…AVDF), 265-294 (NGIT…QIDA), 298-327 (DGLT…PLLA), 331-360 (NGLS…PVDD), 364-393 (DYLT…NPNA), 397-426 (NGFT…SIQA), 430-459 (SGLT…SPDV), 463-492 (RGET…LVDA), 496-525 (EEQT…HPDA), 529-558 (NGYT…AHSL), 562-591 (KGFT…AADS), 595-624 (NGLT…SPHA), 628-657 (NGYT…ETNI), 661-690 (QGVT…NIHM), 694-723 (SGLT…DQDA), 727-756 (LGYT…NVNA), 760-789 (NGYT…KPNA), and 793-822 (NGNT…EVTT). 2 positions are modified to phosphoserine: S31 and S34. A Phosphotyrosine modification is found at Y378. Y531 bears the Phosphotyrosine mark. The residue at position 846 (S846) is a Phosphoserine. T853 is modified (phosphothreonine). S874 is modified (phosphoserine). Positions 966–1125 (SGFLVSFMVD…ELNEILNGMD (160 aa)) are interaction with SPTBN1. ZU5 domains follow at residues 968–1156 (FLVS…VVSR) and 1158–1304 (KQDS…LIDC). The interval 1289-1423 (VSFTTNVSAR…FVKVRDTTQE (135 aa)) is UPA domain. Phosphotyrosine is present on Y1382. The Death 1 domain occupies 1450 to 1535 (ITLPIYTKES…SDKAGSIKVK (86 aa)). The interval 1457–1486 (KESESDQEQEEEIDMTSEKNDETESTETSV) is disordered. Phosphoserine is present on residues S1459, S1461, S1473, S1500, and S1596. The span at 1461-1471 (SDQEQEEEIDM) shows a compositional bias: acidic residues. Disordered stretches follow at residues 1670–2137 (AVGR…TDFS), 2197–2411 (ALDG…GLEL), 2430–2484 (AVSH…GIFP), 2507–2586 (SRLL…TPEE), 2604–2852 (EAKQ…SLPH), 2864–2904 (DISA…TDRF), and 2923–2951 (QITS…ANHT). 2 stretches are compositionally biased toward basic and acidic residues: residues 1674 to 1683 (SSEKEGKDIP) and 1711 to 1733 (KQKQ…KGSS). S1732, S1733, and S1736 each carry phosphoserine. Residues 1766–1783 (IKDKVKALQKRVEDEQKG) are compositionally biased toward basic and acidic residues. Repeat A repeat units lie at residues 1806–1817 (HPAASPSLKSER), 1818–1829 (HAPGSPSPKTER), 1830–1841 (HSTLSSSAKTER), 1842–1853 (HPPVSPSSKTEK), 1854–1865 (HSPVSPSAKTER), 1866–1877 (HSPASSSSKTEK), and 1878–1889 (HSPVSPSTKTER). The interval 1806-1983 (HPAASPSLKS…PVSPTSKTER (178 aa)) is repeat-rich region. Residues S1855 and S1858 each carry the phosphoserine modification. 2 stretches are compositionally biased toward basic and acidic residues: residues 1886–1902 (KTER…ERHP) and 1921–1937 (RTEK…EKRL). A Repeat A; approximate repeat occupies 1890–1900 (HSPVSSTKTER). Repeat A repeat units lie at residues 1901 to 1912 (HPPVSPSGKTDK) and 1913 to 1924 (RPPVSPSGRTEK). The stretch at 1925–1935 (HPPVSPGRTEK) is one Repeat A; approximate repeat. Position 1929 is a phosphoserine (S1929). Repeat A repeat units follow at residues 1936–1947 (RLPVSPSGRTDK), 1948–1959 (HQPVSTAGKTEK), 1960–1971 (HLPVSPSGKTEK), and 1972–1983 (QPPVSPTSKTER). Composition is skewed to basic and acidic residues over residues 1980–1994 (KTER…RELM), 2003–2034 (PSKH…KEKG), 2075–2093 (VKKE…HKIP), and 2102–2117 (EESH…KMAD). S2127 is modified (phosphoserine). A compositionally biased stretch (basic and acidic residues) spans 2128–2137 (PDRKTSTDFS). A Phosphothreonine modification is found at T2239. Positions 2240–2251 (PETSPESLSFSP) are enriched in polar residues. S2243 is modified (phosphoserine). The span at 2252-2282 (KKSEEQTGETKESTKTETTTEIRSEKEHPTT) shows a compositional bias: basic and acidic residues. The residue at position 2269 (T2269) is a Phosphothreonine. S2275 is subject to Phosphoserine. Over residues 2355 to 2376 (TFGSSAHKTQTDSEVQESTATS) the composition is skewed to polar residues. Residues S2405, S2440, S2454, S2516, and S2521 each carry the phosphoserine modification. Residues 2523–2545 (EQTSLMESSGKSPLSPDTPSSEE) show a composition bias toward polar residues. Basic and acidic residues-rich tracts occupy residues 2576–2586 (NGEKKRFTPEE) and 2604–2619 (EAKQ…KQEE). T2583 carries the phosphothreonine modification. S2679 and S2701 each carry phosphoserine. A compositionally biased stretch (low complexity) spans 2696–2705 (PSSMDSNSSP). The segment covering 2729–2776 (EPGKSEEEKDSESHLAEDRHAVSTEAEDRSYDKLNRDTDQPKICDGHG) has biased composition (basic and acidic residues). Phosphoserine is present on residues S2781 and S2795. A compositionally biased stretch (low complexity) spans 2781–2791 (SPSSSAAPVSS). Positions 2892–2903 (SQDSSITTQTDR) are enriched in polar residues. A Phosphoserine modification is found at S2956. 3 disordered regions span residues 2987–3016 (NFEG…SSFE), 3069–3099 (LMVD…SEQN), and 3136–3462 (QESR…PTKE). Polar residues predominate over residues 2998 to 3016 (QQESTLWEMQSDSVSSSFE). Phosphoserine is present on S3075. Phosphothreonine is present on T3078. A compositionally biased stretch (low complexity) spans 3078–3087 (TTPDTTPART). A compositionally biased stretch (polar residues) spans 3090 to 3099 (EEGTPTSEQN). The span at 3137-3149 (ESREETLSEDVKE) shows a compositional bias: basic and acidic residues. Over residues 3157–3169 (LPLETSAESLALS) the composition is skewed to low complexity. Over residues 3175 to 3194 (VDDEADLLPDDVSEEVEEIP) the composition is skewed to acidic residues. Polar residues-rich tracts occupy residues 3198–3212 (AQLN…STET) and 3256–3265 (LDFSTLTRSV). S3273, S3276, and S3277 each carry phosphoserine. Residues 3335 to 3344 (EENKADEAKP) are compositionally biased toward basic and acidic residues. Polar residues predominate over residues 3357-3374 (VEQQLSDLDTSVQKTVAP). Residues S3390 and S3409 each carry the phosphoserine modification. Basic and acidic residues predominate over residues 3409–3423 (SYTETETESRERAEE). The span at 3446–3460 (SRSTTSSCRGGTSPT) shows a compositional bias: low complexity. S3474 is subject to Phosphoserine. The 85-residue stretch at 3569–3653 (IEERLAYIAD…DIVHLMETNT (85 aa)) folds into the Death 2 domain. Residue S3735 is modified to Phosphoserine. T3776, T3797, T3803, and T3814 each carry phosphothreonine. The disordered stretch occupies residues 3777 to 3858 (PGTETSETQK…VESADNQPET (82 aa)). At S3823 the chain carries Phosphoserine. Residues 3832–3841 (PSEHREESSP) are compositionally biased toward basic and acidic residues. Position 3909 is a phosphoserine (S3909).

Interacts with RHBG and SPTBN1. Colocalizes with Na/K ATPase, Na/Ca exchanger and SPTBN1. Directly interacts with DMD; this interaction is necessary for DMD localization at the sarcolemma. Interacts with DCTN4; this interaction is required for DCTN4 retention at costameres. Identified in complexes that contain VIM, EZR, AHNAK, BFSP1, BFSP2, ANK2, PLEC, PRX and spectrin. Interacts (via death domain) with RABGAP1L (via Rab-GAP TBC domain). In terms of processing, phosphorylated at multiple sites by different protein kinases and each phosphorylation event regulates the protein's structure and function. In terms of tissue distribution, present in plasma membrane of neurons as well as glial cells throughout the brain. Expressed in fetal brain and in temporal cortex of adult brain. Also expressed in the inner segments of rod photoreceptors in retina.

Its subcellular location is the cytoplasm. The protein resides in the cytoskeleton. It localises to the membrane. It is found in the myofibril. The protein localises to the sarcomere. Its subcellular location is the m line. The protein resides in the apical cell membrane. It localises to the cell membrane. It is found in the postsynaptic cell membrane. The protein localises to the early endosome. Its subcellular location is the recycling endosome. The protein resides in the lysosome. It localises to the mitochondrion. It is found in the z line. The protein localises to the sarcolemma. Its subcellular location is the T-tubule. In terms of biological role, plays an essential role in the localization and membrane stabilization of ion transporters and ion channels in several cell types, including cardiomyocytes, as well as in striated muscle cells. In skeletal muscle, required for proper localization of DMD and DCTN4 and for the formation and/or stability of a special subset of microtubules associated with costameres and neuromuscular junctions. In cardiomyocytes, required for coordinate assembly of Na/Ca exchanger, SLC8A1/NCX1, Na/K ATPases ATP1A1 and ATP1A2 and inositol 1,4,5-trisphosphate (InsP3) receptors at sarcoplasmic reticulum/sarcolemma sites. Required for expression and targeting of SPTBN1 in neonatal cardiomyocytes and for the regulation of neonatal cardiomyocyte contraction rate. In the inner segment of rod photoreceptors, required for the coordinated expression of the Na/K ATPase, Na/Ca exchanger and beta-2-spectrin (SPTBN1). Plays a role in endocytosis and intracellular protein transport. Associates with phosphatidylinositol 3-phosphate (PI3P)-positive organelles and binds dynactin to promote long-range motility of cells. Recruits RABGAP1L to (PI3P)-positive early endosomes, where RABGAP1L inactivates RAB22A, and promotes polarized trafficking to the leading edge of the migrating cells. Part of the ANK2/RABGAP1L complex which is required for the polarized recycling of fibronectin receptor ITGA5 ITGB1 to the plasma membrane that enables continuous directional cell migration. The polypeptide is Ankyrin-2 (ANK2) (Homo sapiens (Human)).